The sequence spans 459 residues: DNA polymerase subunit gamma-2 (459 aa).

In terms of assembly, heterotrimer composed of a catalytic subunit and a homodimer of accessory subunits (POLG:POLG2).

It localises to the mitochondrion. Its subcellular location is the mitochondrion matrix. The protein localises to the mitochondrion nucleoid. Functionally, accessory subunit of DNA polymerase gamma solely responsible for replication of mitochondrial DNA (mtDNA). Acts as an allosteric regulator of the holoenzyme activities. Enhances the polymerase activity and the processivity of POLG by increasing its interactions with the DNA template. Suppresses POLG exonucleolytic proofreading especially toward homopolymeric templates bearing mismatched termini. Binds to single-stranded DNA. The polypeptide is DNA polymerase subunit gamma-2 (Polg2) (Mus musculus (Mouse)).